Consider the following 224-residue polypeptide: Deoxyribose-phosphate aldolase (224 aa).

The Proton donor/acceptor role is filled by aspartate 92. Lysine 155 (schiff-base intermediate with acetaldehyde) is an active-site residue. Lysine 184 (proton donor/acceptor) is an active-site residue.

It belongs to the DeoC/FbaB aldolase family. DeoC type 1 subfamily.

Its subcellular location is the cytoplasm. It carries out the reaction 2-deoxy-D-ribose 5-phosphate = D-glyceraldehyde 3-phosphate + acetaldehyde. The protein operates within carbohydrate degradation; 2-deoxy-D-ribose 1-phosphate degradation; D-glyceraldehyde 3-phosphate and acetaldehyde from 2-deoxy-alpha-D-ribose 1-phosphate: step 2/2. Catalyzes a reversible aldol reaction between acetaldehyde and D-glyceraldehyde 3-phosphate to generate 2-deoxy-D-ribose 5-phosphate. The chain is Deoxyribose-phosphate aldolase from Clostridium perfringens (strain ATCC 13124 / DSM 756 / JCM 1290 / NCIMB 6125 / NCTC 8237 / Type A).